The sequence spans 264 residues: Secretory carrier-associated membrane protein 4 (264 aa).

A disordered region spans residues 1-33 (MNRHHDPNPFDEDEEIVNPFSKGGGRVPAASRP). Residues 1–122 (MNRHHDPNPF…AQKLQYLAFA (122 aa)) are Cytoplasmic-facing. Residues 51-85 (MNDSSQKQRKLADWEAELRKKEMDIKRREEAIAKF) adopt a coiled-coil conformation. 4 consecutive transmembrane segments (helical) span residues 123 to 143 (SWLGIVLCLVFNVIATMVCWI), 150 to 170 (IFFLATIYALIGCPLSYVLWY), 185 to 205 (FGWFFFTYLIHIGFCIVAAIA), and 233 to 253 (IFYFIGFGLFCLESLLSLWVL). At 254-264 (QKIYLYFRGNK) the chain is on the cytoplasmic side.

The protein belongs to the SCAMP family.

Its subcellular location is the cell membrane. The protein resides in the cytoplasmic vesicle. It is found in the secretory vesicle membrane. Its function is as follows. Probably involved in membrane trafficking. This Arabidopsis thaliana (Mouse-ear cress) protein is Secretory carrier-associated membrane protein 4 (SCAMP4).